The chain runs to 499 residues: GTPase Der (499 aa).

One can recognise an EngA-type G 1 domain in the interval 3–166; the sequence is PVIALVGRPN…QALGIFPKDN (164 aa). GTP-binding positions include 9–16, 56–60, and 118–121; these read GRPNVGKS, DTGGI, and NKVD. Residues 166-199 form a disordered region; it reads NADENAEGEEGGELAEGEEVVAEGQEPKRIPGPS. Acidic residues predominate over residues 168 to 186; sequence DENAEGEEGGELAEGEEVV. Over residues 190-199 the composition is skewed to basic and acidic residues; that stretch reads QEPKRIPGPS. In terms of domain architecture, EngA-type G 2 spans 204-377; that stretch reads IKIAIIGRPN…SVQAAFKSAI (174 aa). GTP is bound by residues 210-217, 257-261, and 322-325; these read GRPNVGKS, DTAGV, and NKWD. A KH-like domain is found at 378–462; it reads TRWPTSRLTQ…PIRIEYKGGD (85 aa). Basic and acidic residues predominate over residues 459–472; that stretch reads KGGDNPYEGKKNTL. The tract at residues 459–499 is disordered; sequence KGGDNPYEGKKNTLTDRQVNKKRRLMSHHKKAEKKRRDKKR. Residues 478-499 are compositionally biased toward basic residues; the sequence is NKKRRLMSHHKKAEKKRRDKKR.

Belongs to the TRAFAC class TrmE-Era-EngA-EngB-Septin-like GTPase superfamily. EngA (Der) GTPase family. In terms of assembly, associates with the 50S ribosomal subunit.

Its function is as follows. GTPase that plays an essential role in the late steps of ribosome biogenesis. This chain is GTPase Der, found in Stutzerimonas stutzeri (strain A1501) (Pseudomonas stutzeri).